Consider the following 1078-residue polypeptide: Isoleucine--tRNA ligase (1078 aa).

The short motif at 52–62 (PTANGKPALHH) is the 'HIGH' region element. The 'KMSKS' region signature appears at 637–641 (KMSKS). Lysine 640 contacts ATP.

The protein belongs to the class-I aminoacyl-tRNA synthetase family. IleS type 2 subfamily. As to quaternary structure, monomer. Zn(2+) serves as cofactor.

The protein localises to the cytoplasm. It carries out the reaction tRNA(Ile) + L-isoleucine + ATP = L-isoleucyl-tRNA(Ile) + AMP + diphosphate. Catalyzes the attachment of isoleucine to tRNA(Ile). As IleRS can inadvertently accommodate and process structurally similar amino acids such as valine, to avoid such errors it has two additional distinct tRNA(Ile)-dependent editing activities. One activity is designated as 'pretransfer' editing and involves the hydrolysis of activated Val-AMP. The other activity is designated 'posttransfer' editing and involves deacylation of mischarged Val-tRNA(Ile). This is Isoleucine--tRNA ligase from Deinococcus radiodurans (strain ATCC 13939 / DSM 20539 / JCM 16871 / CCUG 27074 / LMG 4051 / NBRC 15346 / NCIMB 9279 / VKM B-1422 / R1).